The chain runs to 650 residues: Probable potassium transport system protein Kup 1 (650 aa).

12 helical membrane-spanning segments follow: residues 12–32 (GLLI…LYVM), 54–74 (ISLV…IIAL), 97–117 (WLVL…TLTP), 139–159 (VSSQ…LFSI), 170–190 (AFGP…LINM), 216–236 (AGIF…ALYS), 249–269 (SWPF…VWIL), 295–315 (LAAI…LITG), 344–364 (IYIP…VLYF), 375–395 (GLSI…WLAM), 400–420 (PVWN…FMIS), and 428–448 (GGYV…VWYY).

It belongs to the HAK/KUP transporter (TC 2.A.72) family.

It is found in the cell membrane. The enzyme catalyses K(+)(in) + H(+)(in) = K(+)(out) + H(+)(out). Transport of potassium into the cell. Likely operates as a K(+):H(+) symporter. The sequence is that of Probable potassium transport system protein Kup 1 from Lactobacillus acidophilus (strain ATCC 700396 / NCK56 / N2 / NCFM).